Here is a 492-residue protein sequence, read N- to C-terminus: Catalase isozyme 2 (492 aa).

A disordered region spans residues 1–32 (MDPYKFRPSSSNDTPFWTTNAGDPVSNNNSSM). The span at 8 to 32 (PSSSNDTPFWTTNAGDPVSNNNSSM) shows a compositional bias: polar residues. Active-site residues include H65 and N138. Residue Y348 participates in heme binding.

Belongs to the catalase family. Homotetramer. It depends on heme as a cofactor. Abundant in hypocotyls and roots. Low levels are seen in the endosperms and cotyledons.

It is found in the peroxisome. The protein localises to the glyoxysome. It catalyses the reaction 2 H2O2 = O2 + 2 H2O. In terms of biological role, occurs in almost all aerobically respiring organisms and serves to protect cells from the toxic effects of hydrogen peroxide. This Ricinus communis (Castor bean) protein is Catalase isozyme 2 (CAT2).